Consider the following 205-residue polypeptide: Large ribosomal subunit protein uL3 (205 aa).

The protein belongs to the universal ribosomal protein uL3 family. Part of the 50S ribosomal subunit. Forms a cluster with proteins L14 and L19.

One of the primary rRNA binding proteins, it binds directly near the 3'-end of the 23S rRNA, where it nucleates assembly of the 50S subunit. This Thermosipho melanesiensis (strain DSM 12029 / CIP 104789 / BI429) protein is Large ribosomal subunit protein uL3.